The following is a 680-amino-acid chain: DNA ligase (680 aa).

NAD(+)-binding positions include 35–39 (DADFD), 86–87 (SL), and Glu-111. Lys-113 (N6-AMP-lysine intermediate) is an active-site residue. Residues Arg-134, Glu-174, Lys-290, and Lys-314 each coordinate NAD(+). Zn(2+) is bound by residues Cys-408, Cys-411, Cys-427, and Cys-433. In terms of domain architecture, BRCT spans 597-680 (VAEQTLEGLT…RLLNTGSADE (84 aa)).

Belongs to the NAD-dependent DNA ligase family. LigA subfamily. The cofactor is Mg(2+). Requires Mn(2+) as cofactor.

It catalyses the reaction NAD(+) + (deoxyribonucleotide)n-3'-hydroxyl + 5'-phospho-(deoxyribonucleotide)m = (deoxyribonucleotide)n+m + AMP + beta-nicotinamide D-nucleotide.. DNA ligase that catalyzes the formation of phosphodiester linkages between 5'-phosphoryl and 3'-hydroxyl groups in double-stranded DNA using NAD as a coenzyme and as the energy source for the reaction. It is essential for DNA replication and repair of damaged DNA. The sequence is that of DNA ligase from Corynebacterium glutamicum (strain R).